Consider the following 682-residue polypeptide: Glutamine--fructose-6-phosphate aminotransferase [isomerizing] 2 (682 aa).

Cysteine 2 acts as the For GATase activity in catalysis. The Glutamine amidotransferase type-2 domain occupies 2–288 (CGIFAYMNYR…DDDIAAVADG (287 aa)). The residue at position 244 (serine 244) is a Phosphoserine. SIS domains follow at residues 360–499 (HLKE…DRIS) and 531–672 (LALE…VDFP). Residues 377–378 (TS), 422–424 (SQS), threonine 427, and histidine 578 each bind substrate.

It carries out the reaction D-fructose 6-phosphate + L-glutamine = D-glucosamine 6-phosphate + L-glutamate. Its pathway is nucleotide-sugar biosynthesis; UDP-N-acetyl-alpha-D-glucosamine biosynthesis; alpha-D-glucosamine 6-phosphate from D-fructose 6-phosphate: step 1/1. Controls the flux of glucose into the hexosamine pathway. Most likely involved in regulating the availability of precursors for N- and O-linked glycosylation of proteins. This Bos taurus (Bovine) protein is Glutamine--fructose-6-phosphate aminotransferase [isomerizing] 2 (GFPT2).